The following is a 278-amino-acid chain: Diaminopimelate epimerase (278 aa).

Substrate is bound by residues Asn11 and Asn75. The active-site Proton donor is the Cys84. Substrate-binding positions include 85–86 (GN), Asn160, Asn195, and 213–214 (ER). Cys222 functions as the Proton acceptor in the catalytic mechanism. 223–224 (GT) is a substrate binding site.

Belongs to the diaminopimelate epimerase family. In terms of assembly, homodimer.

Its subcellular location is the cytoplasm. It catalyses the reaction (2S,6S)-2,6-diaminopimelate = meso-2,6-diaminopimelate. It functions in the pathway amino-acid biosynthesis; L-lysine biosynthesis via DAP pathway; DL-2,6-diaminopimelate from LL-2,6-diaminopimelate: step 1/1. Its function is as follows. Catalyzes the stereoinversion of LL-2,6-diaminopimelate (L,L-DAP) to meso-diaminopimelate (meso-DAP), a precursor of L-lysine and an essential component of the bacterial peptidoglycan. The polypeptide is Diaminopimelate epimerase (Corynebacterium aurimucosum (strain ATCC 700975 / DSM 44827 / CIP 107346 / CN-1) (Corynebacterium nigricans)).